A 397-amino-acid chain; its full sequence is 1-carboxy-3-chloro-3,4-dihydroxycyclo hexa-1,5-diene dehydrogenase (397 aa).

This sequence to P.putida PHT4.

The chain is 1-carboxy-3-chloro-3,4-dihydroxycyclo hexa-1,5-diene dehydrogenase (cbaC) from Comamonas testosteroni (Pseudomonas testosteroni).